The sequence spans 411 residues: UPF0761 membrane protein PA14_51960 (411 aa).

The next 6 helical transmembrane spans lie at 36–56 (LFAV…IPAF), 92–112 (HLTW…LVTI), 132–152 (FLLY…GFAV), 174–194 (LLGL…YSAV), 207–229 (GGVF…VSLF), and 244–264 (IFLL…VLVC).

Belongs to the UPF0761 family.

It is found in the cell inner membrane. The polypeptide is UPF0761 membrane protein PA14_51960 (Pseudomonas aeruginosa (strain UCBPP-PA14)).